The following is a 215-amino-acid chain: Large ribosomal subunit protein uL4c (215 aa).

Residues 51–87 (QKQGTVSTKTRSEVRGGGKKPWRQKGTGRARAGSSRS) form a disordered region. The segment covering 67–78 (GGKKPWRQKGTG) has biased composition (basic residues).

Belongs to the universal ribosomal protein uL4 family. Part of the 50S ribosomal subunit.

It localises to the plastid. It is found in the chloroplast. In terms of biological role, probably binds the 23S rRNA. In Thalassiosira pseudonana (Marine diatom), this protein is Large ribosomal subunit protein uL4c (rpl4).